Here is a 469-residue protein sequence, read N- to C-terminus: Glutamate--tRNA ligase (469 aa).

Positions 11-21 (PSPTGFIHLGN) match the 'HIGH' region motif. Residues 243-247 (KMSKR) carry the 'KMSKS' region motif. Lys246 provides a ligand contact to ATP.

This sequence belongs to the class-I aminoacyl-tRNA synthetase family. Glutamate--tRNA ligase type 1 subfamily. In terms of assembly, monomer.

Its subcellular location is the cytoplasm. The enzyme catalyses tRNA(Glu) + L-glutamate + ATP = L-glutamyl-tRNA(Glu) + AMP + diphosphate. Functionally, catalyzes the attachment of glutamate to tRNA(Glu) in a two-step reaction: glutamate is first activated by ATP to form Glu-AMP and then transferred to the acceptor end of tRNA(Glu). This is Glutamate--tRNA ligase from Burkholderia cenocepacia (strain HI2424).